The primary structure comprises 337 residues: Eukaryotic translation initiation factor 3 subunit H (337 aa).

The MPN domain maps to 21–153; it reads VQCDGLAVMK…LKAYRLTPQA (133 aa).

Belongs to the eIF-3 subunit H family. Component of the eukaryotic translation initiation factor 3 (eIF-3) complex. The eIF-3 complex interacts with pix. Interacts with mxt.

Its subcellular location is the cytoplasm. Its function is as follows. Component of the eukaryotic translation initiation factor 3 (eIF-3) complex, which is involved in protein synthesis of a specialized repertoire of mRNAs and, together with other initiation factors, stimulates binding of mRNA and methionyl-tRNAi to the 40S ribosome. The eIF-3 complex specifically targets and initiates translation of a subset of mRNAs involved in cell proliferation. This Drosophila pseudoobscura pseudoobscura (Fruit fly) protein is Eukaryotic translation initiation factor 3 subunit H.